An 89-amino-acid chain; its full sequence is Cytochrome c6 (89 aa).

C14, C17, H18, and M62 together coordinate heme c.

The protein belongs to the cytochrome c family. PetJ subfamily. As to quaternary structure, monomer. Homodimer, or even higher oligomerization, in crystal structures. Post-translationally, binds 1 heme c group covalently per subunit.

The protein localises to the cellular thylakoid lumen. In terms of biological role, functions as an electron carrier between membrane-bound cytochrome b6-f and photosystem I in oxygenic photosynthesis. This Limnospira maxima (Arthrospira maxima) protein is Cytochrome c6 (petJ).